Here is a 131-residue protein sequence, read N- to C-terminus: Large ribosomal subunit protein bL12 (131 aa).

This sequence belongs to the bacterial ribosomal protein bL12 family. Homodimer. Part of the ribosomal stalk of the 50S ribosomal subunit. Forms a multimeric L10(L12)X complex, where L10 forms an elongated spine to which 2 to 4 L12 dimers bind in a sequential fashion. Binds GTP-bound translation factors.

Functionally, forms part of the ribosomal stalk which helps the ribosome interact with GTP-bound translation factors. Is thus essential for accurate translation. The protein is Large ribosomal subunit protein bL12 of Prochlorococcus marinus (strain MIT 9312).